The chain runs to 749 residues: Cytosolic phospholipase A2 (749 aa).

Residues 1-178 are phospholipid binding; the sequence is MSFIDPYQHI…MKKLLGPKNS (178 aa). A Phosphoserine modification is found at Ser-2. The region spanning 6–122 is the C2 domain; that stretch reads PYQHIIVEHQ…KVGEKKEVPF (117 aa). Ca(2+) is bound by residues Asp-40, Thr-41, Asp-43, Asn-65, Asp-93, Ala-94, and Asn-95. The PLA2c domain maps to 140–740; it reads SCPDLRFSMA…SNVEARRFFN (601 aa). The active-site Nucleophile is Ser-228. At Thr-268 the chain carries Phosphothreonine. The disordered stretch occupies residues 409–457; sequence GSQSRGSTMEEELENITTKHIVSNDSSDSDDESHEPKGTENEDAGSDYQ. Phosphoserine is present on residues Ser-434, Ser-435, and Ser-437. Position 505 is a phosphoserine; by MAPK (Ser-505). Phosphoserine is present on Ser-515. Residue Lys-541 forms a Glycyl lysine isopeptide (Lys-Gly) (interchain with G-Cter in SUMO2) linkage. Asp-549 serves as the catalytic Proton acceptor. Residue Lys-606 forms a Glycyl lysine isopeptide (Lys-Gly) (interchain with G-Cter in SUMO2) linkage. Ser-727 and Ser-729 each carry phosphoserine.

As to quaternary structure, interacts with KAT5. In terms of processing, phosphorylated at both Ser-505 and Ser-727 in response to mitogenic stimuli. As to expression, expressed in various cells and tissues such as macrophages, neutrophils, fibroblasts and lung endothelium. Expressed in platelets (at protein level).

The protein localises to the cytoplasm. The protein resides in the golgi apparatus membrane. Its subcellular location is the nucleus envelope. It catalyses the reaction a 1,2-diacyl-sn-glycero-3-phosphocholine + H2O = a 1-acyl-sn-glycero-3-phosphocholine + a fatty acid + H(+). The catalysed reaction is a 1-O-alkyl-2-acyl-sn-glycero-3-phosphocholine + H2O = a 1-O-alkyl-sn-glycero-3-phosphocholine + a fatty acid + H(+). It carries out the reaction a 1-acyl-sn-glycero-3-phosphocholine + H2O = sn-glycerol 3-phosphocholine + a fatty acid + H(+). The enzyme catalyses 1-hexadecanoyl-2-(5Z,8Z,11Z,14Z-eicosatetraenoyl)-sn-glycero-3-phosphocholine + H2O = 1-hexadecanoyl-sn-glycero-3-phosphocholine + (5Z,8Z,11Z,14Z)-eicosatetraenoate + H(+). It catalyses the reaction 1,2-di-(5Z,8Z,11Z,14Z-eicosatetraenoyl)-sn-glycero-3-phosphocholine + H2O = 1-(5Z,8Z,11Z,14Z-eicosatetraenoyl)-sn-glycero-3-phosphocholine + (5Z,8Z,11Z,14Z)-eicosatetraenoate + H(+). The catalysed reaction is 1-octadecanoyl-2-(5Z,8Z,11Z,14Z-eicosatetraenoyl)-sn-glycero-3-phosphocholine + H2O = 1-octadecanoyl-sn-glycero-3-phosphocholine + (5Z,8Z,11Z,14Z)-eicosatetraenoate + H(+). It carries out the reaction 1-hexadecanoyl-2-(9Z,12Z-octadecadienoyl)-sn-glycero-3-phosphocholine + H2O = (9Z,12Z)-octadecadienoate + 1-hexadecanoyl-sn-glycero-3-phosphocholine + H(+). The enzyme catalyses 1-octadecanoyl-2-(9Z,12Z,15Z-octadecatrienoyl)-sn-glycero-3-phosphocholine + H2O = (9Z,12Z,15Z)-octadecatrienoate + 1-octadecanoyl-sn-glycero-3-phosphocholine + H(+). It catalyses the reaction 1-(5Z,8Z,11Z,14Z-eicosatetraenoyl)-2-hexadecanoyl-sn-glycero-3-phosphocholine + H2O = 1-(5Z,8Z,11Z,14Z-eicosatetraenoyl)-sn-glycero-3-phosphocholine + hexadecanoate + H(+). The catalysed reaction is 1-O-hexadecyl-2-(5Z,8Z,11Z,14Z)-eicosatetraenoyl-sn-glycero-3-phosphocholine + H2O = 1-O-hexadecyl-sn-glycero-3-phosphocholine + (5Z,8Z,11Z,14Z)-eicosatetraenoate + H(+). It carries out the reaction 1,2-di-(9Z-octadecenoyl)-sn-glycero-3-phospho-(1'-sn-glycerol) + H2O = 1-(9Z-octadecenoyl)-sn-glycero-3-phospho-(1'-sn-glycerol) + (9Z)-octadecenoate + H(+). The enzyme catalyses 1-octadecanoyl-2-(5Z,8Z,11Z,14Z-eicosatetraenoyl)-sn-glycero-3-phosphate + H2O = 1-octadecanoyl-sn-glycero-3-phosphate + (5Z,8Z,11Z,14Z)-eicosatetraenoate + H(+). It catalyses the reaction 1-hexadecanoyl-sn-glycero-3-phosphocholine + H2O = sn-glycerol 3-phosphocholine + hexadecanoate + H(+). The catalysed reaction is 2-(prostaglandin E2)-sn-glycero-3-phosphoethanolamine + H2O = sn-glycero-3-phosphoethanolamine + prostaglandin E2 + H(+). It carries out the reaction 2-[(15S)-hydroxy-(5Z,8Z,11Z,13E)-eicosatetraenoyl]-sn-glycero-3-phosphocholine + H2O = (15S)-hydroxy-(5Z,8Z,11Z,13E)-eicosatetraenoate + sn-glycerol 3-phosphocholine + H(+). The enzyme catalyses 2-[(15R)-hydroxy-(5Z,8Z,11Z,13E)-eicosatetraenoyl]-sn-glycero-3-phosphocholine + H2O = (15R)-hydroxy-(5Z,8Z,11Z,13E)-eicosatetraenoate + sn-glycerol 3-phosphocholine + H(+). It catalyses the reaction 2-(prostaglandin E2)-sn-glycero-3-phosphocholine + H2O = prostaglandin E2 + sn-glycerol 3-phosphocholine + H(+). The catalysed reaction is 2-[(11R)-hydroxy-(5Z,8Z,12E,14Z)-eicosatetraenoyl]-sn-glycero-3-phosphocholine + H2O = (11R)-hydroxy-(5Z,8Z,12E,14Z)-eicosatetraenoate + sn-glycerol 3-phosphocholine + H(+). It carries out the reaction 1-(5Z,8Z,11Z,14Z-eicosatetraenoyl)-2-O-hexadecyl-sn-glycero-3-phosphocholine + H2O = 2-O-hexadecyl-sn-glycero-3-phosphocholine + (5Z,8Z,11Z,14Z)-eicosatetraenoate + H(+). The enzyme catalyses 1-octadecanoyl-2-(5Z,8Z,11Z,14Z-eicosatetraenoyl)-sn-glycero-3-phosphocholine + glycerol = 1-(5Z,8Z,11Z,14Z-eicosatetraenoyl)-glycerol + 1-octadecanoyl-sn-glycero-3-phosphocholine. It catalyses the reaction 1-octadecanoyl-2-(9Z,12Z,15Z-octadecatrienoyl)-sn-glycero-3-phosphocholine + glycerol = 1-(9Z,12Z,15Z-octadecatrienoyl)-glycerol + 1-octadecanoyl-sn-glycero-3-phosphocholine. The protein operates within membrane lipid metabolism; glycerophospholipid metabolism. It functions in the pathway lipid metabolism; arachidonate metabolism. It participates in lipid metabolism; prostaglandin biosynthesis. Its pathway is lipid metabolism; leukotriene B4 biosynthesis. Its activity is regulated as follows. Activated by cytosolic calcium, which is necessary for binding to membrane lipids. Activated by phosphorylation in response to mitogenic stimuli. Activated by ceramide-1-phosphate. Binding (via C2 domain) to ceramide-1-phosphate increases the affinity for membrane lipids. Can be activated by phosphoinositides in the absence of calcium. Inhibited by ANXA5 in a calcium- and substrate-dependent way. Functionally, has primarily calcium-dependent phospholipase and lysophospholipase activities, with a major role in membrane lipid remodeling and biosynthesis of lipid mediators of the inflammatory response. Plays an important role in embryo implantation and parturition through its ability to trigger prostanoid production. Preferentially hydrolyzes the ester bond of the fatty acyl group attached at sn-2 position of phospholipids (phospholipase A2 activity). Selectively hydrolyzes sn-2 arachidonoyl group from membrane phospholipids, providing the precursor for eicosanoid biosynthesis via the cyclooxygenase pathway. In an alternative pathway of eicosanoid biosynthesis, hydrolyzes sn-2 fatty acyl chain of eicosanoid lysophopholipids to release free bioactive eicosanoids. Hydrolyzes the ester bond of the fatty acyl group attached at sn-1 position of phospholipids (phospholipase A1 activity) only if an ether linkage rather than an ester linkage is present at the sn-2 position. This hydrolysis is not stereospecific. Has calcium-independent phospholipase A2 and lysophospholipase activities in the presence of phosphoinositides. Has O-acyltransferase activity. Catalyzes the transfer of fatty acyl chains from phospholipids to a primary hydroxyl group of glycerol (sn-1 or sn-3), potentially contributing to monoacylglycerol synthesis. The sequence is that of Cytosolic phospholipase A2 (PLA2G4A) from Homo sapiens (Human).